We begin with the raw amino-acid sequence, 522 residues long: Lysine--tRNA ligase (522 aa).

Positions 44–52 (PSGLPHIGT) match the 'HIGH' region motif. Residues 290–294 (KISKS) carry the 'KMSKS' region motif. Lys293 serves as a coordination point for ATP.

Belongs to the class-I aminoacyl-tRNA synthetase family.

The protein localises to the cytoplasm. It carries out the reaction tRNA(Lys) + L-lysine + ATP = L-lysyl-tRNA(Lys) + AMP + diphosphate. The polypeptide is Lysine--tRNA ligase (Rickettsia peacockii (strain Rustic)).